Consider the following 591-residue polypeptide: L-fucose isomerase (591 aa).

Active-site proton acceptor residues include glutamate 337 and aspartate 361. Residues glutamate 337, aspartate 361, and histidine 528 each coordinate Mn(2+).

The protein belongs to the L-fucose isomerase family. As to quaternary structure, homohexamer. Mn(2+) serves as cofactor.

Its subcellular location is the cytoplasm. The catalysed reaction is L-fucose = L-fuculose. It functions in the pathway carbohydrate degradation; L-fucose degradation; L-lactaldehyde and glycerone phosphate from L-fucose: step 1/3. In terms of biological role, converts the aldose L-fucose into the corresponding ketose L-fuculose. This chain is L-fucose isomerase, found in Escherichia coli O17:K52:H18 (strain UMN026 / ExPEC).